Consider the following 285-residue polypeptide: MLIIRNRQELKEAILKQKKANKTIGFVPTMGFLHEGHMTLVSHARKETDFVVMSVFVNPTQFGPNEDFDAYPRDEAHDAKLAEEGGVDILFVPTVEEIYPTELATKLHVIKRVSVLDGADREGHFDGVVTVLTKLFHLVNPDNAYFGQKDAQQVAVVSGLVEDYFFPVNLRIIPTVREADGLAKSSRNVYLTETERKEAPVIHAALQLGRQLIDSGETDEAKIVQVMTDKINEQTSHEKIAYLALYSYPEFTPVTDWTKGIIIAAAVKYSKARLIDNELINVKRR.

Residue 30 to 37 participates in ATP binding; that stretch reads MGFLHEGH. Residue His37 is the Proton donor of the active site. Residue Gln61 coordinates (R)-pantoate. Residue Gln61 coordinates beta-alanine. Position 147-150 (147-150) interacts with ATP; that stretch reads GQKD. A (R)-pantoate-binding site is contributed by Gln153. ATP is bound by residues Val176 and 184–187; that span reads KSSR.

Belongs to the pantothenate synthetase family. As to quaternary structure, homodimer.

It is found in the cytoplasm. It carries out the reaction (R)-pantoate + beta-alanine + ATP = (R)-pantothenate + AMP + diphosphate + H(+). The protein operates within cofactor biosynthesis; (R)-pantothenate biosynthesis; (R)-pantothenate from (R)-pantoate and beta-alanine: step 1/1. In terms of biological role, catalyzes the condensation of pantoate with beta-alanine in an ATP-dependent reaction via a pantoyl-adenylate intermediate. The protein is Pantothenate synthetase of Listeria innocua serovar 6a (strain ATCC BAA-680 / CLIP 11262).